The primary structure comprises 314 residues: Prohormone-3 (314 aa).

An N-terminal signal peptide occupies residues M1 to T19. A helical transmembrane segment spans residues Y90–G112.

It is found in the membrane. The chain is Prohormone-3 from Apis mellifera (Honeybee).